A 68-amino-acid chain; its full sequence is ATP synthase protein 8 (68 aa).

A helical membrane pass occupies residues V8–M24. K54 bears the N6-acetyllysine; alternate mark. Position 54 is an N6-succinyllysine; alternate (K54). K57 carries the N6-acetyllysine modification.

This sequence belongs to the ATPase protein 8 family. In terms of assembly, F-type ATPases have 2 components, CF(1) - the catalytic core - and CF(0) - the membrane proton channel. Component of an ATP synthase complex composed of ATP5PB, ATP5MC1, ATP5F1E, ATP5PD, ATP5ME, ATP5PF, ATP5MF, MT-ATP6, MT-ATP8, ATP5F1A, ATP5F1B, ATP5F1D, ATP5F1C, ATP5PO, ATP5MG, ATP5MK and ATP5MJ. Interacts with PRICKLE3.

The protein localises to the mitochondrion membrane. In terms of biological role, mitochondrial membrane ATP synthase (F(1)F(0) ATP synthase or Complex V) produces ATP from ADP in the presence of a proton gradient across the membrane which is generated by electron transport complexes of the respiratory chain. F-type ATPases consist of two structural domains, F(1) - containing the extramembraneous catalytic core and F(0) - containing the membrane proton channel, linked together by a central stalk and a peripheral stalk. During catalysis, ATP synthesis in the catalytic domain of F(1) is coupled via a rotary mechanism of the central stalk subunits to proton translocation. Part of the complex F(0) domain. Minor subunit located with subunit a in the membrane. The protein is ATP synthase protein 8 (MT-ATP8) of Hylobates lar (Lar gibbon).